Here is a 942-residue protein sequence, read N- to C-terminus: Endoprotease bli-4 (942 aa).

Positions 1–22 are cleaved as a signal peptide; sequence MRISIGRIAWQILAVLIAVAFT. Positions 23–116 are excised as a propeptide; that stretch reads IEHDSICDES…EQRPKKRVKR (94 aa). The Lumenal segment spans residues 117 to 871; that stretch reads DYILLDNDVH…TLLIDSNKSS (755 aa). Position 124 (Asp124) interacts with Ca(2+). Positions 130 to 160 are disordered; sequence PFRRSVLNRDGTRRAQRQQPQSPREIPSLPF. In terms of domain architecture, Peptidase S8 spans 168–483; it reads QWYLHGGAVG…YGLIDGGALV (316 aa). N-linked (GlcNAc...) asparagine glycosylation is present at Asn195. Residue Asp202 is the Charge relay system of the active site. Residue Asp203 coordinates substrate. Ca(2+) is bound by residues Asp211, Asp223, Asp228, and Asp230. The segment at 211–242 is disordered; the sequence is DLAANYDPLASTDINDHDDDPTPQNNGDNKHG. Substrate is bound at residue 238–239; it reads DN. His241 (charge relay system) is an active-site residue. Ca(2+) contacts are provided by Leu252, Asn255, Gln257, and Gly259. 2 cysteine pairs are disulfide-bonded: Cys258–Cys407 and Cys350–Cys380. Substrate is bound by residues Glu283, 300–305, Asp311, and 339–342; these read SWGPED and ASGN. Asp305 is a binding site for Ca(2+). Asp348 is a Ca(2+) binding site. Residues Asp353 and Tyr355 each coordinate substrate. Glu378 is a Ca(2+) binding site. Ser415 functions as the Charge relay system in the catalytic mechanism. Ser415 provides a ligand contact to substrate. Residues 491 to 629 form the P/Homo B domain; the sequence is TVPEQHICTY…TLLLYGTADP (139 aa). A disulfide bridge connects residues Cys498 and Cys527. An N-linked (GlcNAc...) asparagine glycan is attached at Asn519. FU repeat units lie at residues 674–723, 725–777, and 804–850; these read NCHD…YYLD, DKCK…LVAD, and GKCD…STKS. Residue Asn868 is glycosylated (N-linked (GlcNAc...) asparagine). A helical membrane pass occupies residues 872–892; sequence GFGLMFWIVVSLIAACGICAC. Over 893 to 942 the chain is Cytoplasmic; it reads KKCASETKSSNVEYAPLAQYNATNGAINLGAHTDDEDDDEDEVFVNPQIV. Positions 922–942 are disordered; sequence GAHTDDEDDDEDEVFVNPQIV. Positions 926 to 935 are enriched in acidic residues; the sequence is DDEDDDEDEV.

The protein belongs to the peptidase S8 family. Furin subfamily. It depends on Ca(2+) as a cofactor. In larvae and adults, expressed in all hypodermal cells, vulva and ventral nerve cords. In terms of tissue distribution, most highly expressed isoform in the embryonic epidermis. As to expression, expressed primarily in the germline. Expressed primarily in pharyngeal epithelial cells.

The protein localises to the membrane. In terms of biological role, serine endoprotease which cleaves proproteins at paired basic amino acids at the consensus RX(K/R)R motif. Involved in N-terminal processing of cuticle collagens and plays a role in cuticle biosynthesis. May cleave both sqt-3 and dpy-17 collagens to promote their secretion. Acts in ASEL sensory neurons to regulate high salt chemotaxis responses probably by cleaving insulin-like protein ins-6 into its mature and active form. Essential for embryonic and larval development. Its function is as follows. Involved in cuticle biosynthesis but dispensable for larval development. The sequence is that of Endoprotease bli-4 (bli-4) from Caenorhabditis elegans.